Consider the following 244-residue polypeptide: ATP synthase subunit a (244 aa).

The next 6 membrane-spanning stretches (helical) occupy residues 17 to 37, 75 to 95, 112 to 132, 164 to 184, 196 to 216, and 217 to 237; these read LTNILMITVASVIVLLIAILT, FLALGVTLLMYIFVSNMLGLP, DPAITLTLAVMVVSLTHYYGV, LTLGLRLYGNIFAGEILLGLL, FFLGLVGTVGAIIPMLAWQAF, and SLFIGTIQAFIFTMLTMVYMS.

The protein belongs to the ATPase A chain family. As to quaternary structure, F-type ATPases have 2 components, CF(1) - the catalytic core - and CF(0) - the membrane proton channel. CF(1) has five subunits: alpha(3), beta(3), gamma(1), delta(1), epsilon(1). CF(0) has three main subunits: a(1), b(2) and c(9-12). The alpha and beta chains form an alternating ring which encloses part of the gamma chain. CF(1) is attached to CF(0) by a central stalk formed by the gamma and epsilon chains, while a peripheral stalk is formed by the delta and b chains.

The protein localises to the cell membrane. Key component of the proton channel; it plays a direct role in the translocation of protons across the membrane. This is ATP synthase subunit a from Bacillus velezensis (strain DSM 23117 / BGSC 10A6 / LMG 26770 / FZB42) (Bacillus amyloliquefaciens subsp. plantarum).